The sequence spans 436 residues: GTPase Der (436 aa).

EngA-type G domains lie at 4-167 (PVVA…KNIP) and 176-351 (VQFC…ENHS). GTP-binding positions include 10-17 (GRPNVGKS), 57-61 (DTGGI), 119-122 (NKLD), 182-189 (GRPNVGKS), 229-233 (DTAGM), and 294-297 (NKWD). The KH-like domain occupies 352-436 (LRVQTNVLND…PIKIFARARK (85 aa)).

This sequence belongs to the TRAFAC class TrmE-Era-EngA-EngB-Septin-like GTPase superfamily. EngA (Der) GTPase family. Associates with the 50S ribosomal subunit.

Its function is as follows. GTPase that plays an essential role in the late steps of ribosome biogenesis. This Bacillus velezensis (strain DSM 23117 / BGSC 10A6 / LMG 26770 / FZB42) (Bacillus amyloliquefaciens subsp. plantarum) protein is GTPase Der.